We begin with the raw amino-acid sequence, 238 residues long: Large ribosomal subunit protein uL1 (238 aa).

The protein belongs to the universal ribosomal protein uL1 family. As to quaternary structure, part of the 50S ribosomal subunit.

In terms of biological role, binds directly to 23S rRNA. The L1 stalk is quite mobile in the ribosome, and is involved in E site tRNA release. Protein L1 is also a translational repressor protein, it controls the translation of the L11 operon by binding to its mRNA. This chain is Large ribosomal subunit protein uL1, found in Salinispora arenicola (strain CNS-205).